The following is a 1296-amino-acid chain: MEILRGSPALSAFRITKLLSRCQDAHLPVSDIYAEYVHFADVSAPLSADEHARLQRLLQYGPSLPEHPPAGRLLLVTPRPGTISPWSSKATDIAHNCGLSQILRLERGLAFSIQGPNLNEGQWKQLAALLHDRMMETVFTDLQQAEQLFSHHQPAPVQRVDILGQGRSALEQANIKLGLALAQDEIDYLLTAFTGLGRNPTDIELYMFAQANSEHCRHKIFNADWVIDGVAQPKTLFKMIKNTFEHTPDYVLSAYKDNAAVMEGSQVGRFYATAEKGIYDYHQEEAHILMKVETHNHPTAISPWPGAATGSGGEIRDEGATGRGAKPKAGLVGFSVSNLRIPGFEQPWEENFGKPDRIVTALDIMTEGPLGGAAFNNEFGRPALLGYFRTYEERVNSHNGIELRGYHKPIMLAGGLGNIRADHVQKGEITVGAKLVVLGGPSMNIGLGGGAASSMASGQSDADLDFASVQRDNPEMERRCQEVIDRCWQLGEYNPILFIHDVGAGGLSNAMPELVNDGGRGGRFELRDILNDEPGMSPLEVWCNESQERYVLAVAPAQMALFDEICRRERAPYAVIGEATEEKHLLLNDRHFGNQPIDMPLDVLLGKTPKMLRDVTRLQAKGDALQRADISLAEAVKRIMHLPAVAEKTFLITIGDRTVTGMVTRDQMVGPWQIPVADCAVTSASLDSYYGEAMSLGERAPVALLDFAASARLAVGEALTNIAATQIGELKRIKLSANWMSAAGHPGEDAGLYDAVRAVGEELCPALEITIPVGKDSMSMKTRWQEGHEQREMTSPLSLVITAFARIEDVRRTVTPQLRTDKGDNALLLIDLGAGHNALGATALTQVYRQLGDKPADVRNVQQLAGFFNAMQRLVADQHLLAYHDRSDGGLLVTLAEMAFAGHCGVTVDIQSLGNDALAALFNEELGAVIQVRAEQRADVEKLLADHGLANCVHYLGRAVAGDTFDIRSGTDVVYSEKRSTLRLWWAETSWQMQRLRDNPDCADQEHQAKQDESDPGLNVKLTFDPAEDIAAPFILKQARPKVAVLREQGVNSHVEMAAAFHRAGFDAVDVHMSDLLAGRTDLQSFQTLVACGGFSYGDVLGAGEGWAKSILFNDRVRDEFEAFFHRPTTLALGVCNGCQMMSNLRELIPGAEHWPRFVRNLSDSFEARFSLVEVASSPSLFMQDMVGSRMPIAVSHGEGQVEVRDAAHLAALEQSHLVALRFVNNHGVVTEQYPANPNGSANGITAVTSVSGRATVMMPHPERVFRTVSNSWHPEEWGEDSPWMRMFRNARKQLG.

The interval 304–323 (WPGAATGSGGEIRDEGATGR) is disordered. ATP is bound by residues 306–317 (GAATGSGGEIRD) and A677. D678, E717, N721, and D885 together coordinate Mg(2+). S887 is a binding site for ATP. The span at 1000 to 1013 (PDCADQEHQAKQDE) shows a compositional bias: basic and acidic residues. A disordered region spans residues 1000-1019 (PDCADQEHQAKQDESDPGLN). A Glutamine amidotransferase type-1 domain is found at 1043 to 1296 (VAVLREQGVN…MFRNARKQLG (254 aa)). The active-site Nucleophile is the C1136. Catalysis depends on residues H1261 and E1263.

It in the N-terminal section; belongs to the FGAMS family. In terms of assembly, monomer.

The protein localises to the cytoplasm. It carries out the reaction N(2)-formyl-N(1)-(5-phospho-beta-D-ribosyl)glycinamide + L-glutamine + ATP + H2O = 2-formamido-N(1)-(5-O-phospho-beta-D-ribosyl)acetamidine + L-glutamate + ADP + phosphate + H(+). It functions in the pathway purine metabolism; IMP biosynthesis via de novo pathway; 5-amino-1-(5-phospho-D-ribosyl)imidazole from N(2)-formyl-N(1)-(5-phospho-D-ribosyl)glycinamide: step 1/2. Phosphoribosylformylglycinamidine synthase involved in the purines biosynthetic pathway. Catalyzes the ATP-dependent conversion of formylglycinamide ribonucleotide (FGAR) and glutamine to yield formylglycinamidine ribonucleotide (FGAM) and glutamate. The sequence is that of Phosphoribosylformylglycinamidine synthase from Yersinia pseudotuberculosis serotype I (strain IP32953).